Consider the following 187-residue polypeptide: Oligoribonuclease (187 aa).

The Exonuclease domain maps to 7-170; it reads LCWLDMEMTG…DDILESIEEM (164 aa). Tyr-128 is an active-site residue.

This sequence belongs to the oligoribonuclease family.

The protein localises to the cytoplasm. Functionally, 3'-to-5' exoribonuclease specific for small oligoribonucleotides. The polypeptide is Oligoribonuclease (Neisseria meningitidis serogroup B (strain ATCC BAA-335 / MC58)).